We begin with the raw amino-acid sequence, 340 residues long: DNA-directed RNA polymerase subunit alpha (340 aa).

The alpha N-terminal domain (alpha-NTD) stretch occupies residues 1–226 (MLIAQRPSLT…ELFGLARELN (226 aa)). Residues 243 to 340 (LAADLALPIE…DAGFVETEQY (98 aa)) form an alpha C-terminal domain (alpha-CTD) region.

Belongs to the RNA polymerase alpha chain family. Homodimer. The RNAP catalytic core consists of 2 alpha, 1 beta, 1 beta' and 1 omega subunit. When a sigma factor is associated with the core the holoenzyme is formed, which can initiate transcription. The last 19 amino acids in the C-terminal part are cleaved in the spore.

It catalyses the reaction RNA(n) + a ribonucleoside 5'-triphosphate = RNA(n+1) + diphosphate. Its function is as follows. DNA-dependent RNA polymerase catalyzes the transcription of DNA into RNA using the four ribonucleoside triphosphates as substrates. This chain is DNA-directed RNA polymerase subunit alpha, found in Streptomyces granaticolor.